The sequence spans 367 residues: Dual-specificity RNA methyltransferase RlmN (367 aa).

Glu-91 acts as the Proton acceptor in catalysis. A Radical SAM core domain is found at 102–337 (GKVRMTQCLS…AIIRKSKGQD (236 aa)). Cys-109 and Cys-342 are joined by a disulfide. [4Fe-4S] cluster contacts are provided by Cys-116, Cys-120, and Cys-123. S-adenosyl-L-methionine-binding positions include 169-170 (GE), Ser-201, 223-225 (SLH), and Asn-299. Catalysis depends on Cys-342, which acts as the S-methylcysteine intermediate.

Belongs to the radical SAM superfamily. RlmN family. It depends on [4Fe-4S] cluster as a cofactor.

It is found in the cytoplasm. The enzyme catalyses adenosine(2503) in 23S rRNA + 2 reduced [2Fe-2S]-[ferredoxin] + 2 S-adenosyl-L-methionine = 2-methyladenosine(2503) in 23S rRNA + 5'-deoxyadenosine + L-methionine + 2 oxidized [2Fe-2S]-[ferredoxin] + S-adenosyl-L-homocysteine. It carries out the reaction adenosine(37) in tRNA + 2 reduced [2Fe-2S]-[ferredoxin] + 2 S-adenosyl-L-methionine = 2-methyladenosine(37) in tRNA + 5'-deoxyadenosine + L-methionine + 2 oxidized [2Fe-2S]-[ferredoxin] + S-adenosyl-L-homocysteine. Functionally, specifically methylates position 2 of adenine 2503 in 23S rRNA and position 2 of adenine 37 in tRNAs. m2A2503 modification seems to play a crucial role in the proofreading step occurring at the peptidyl transferase center and thus would serve to optimize ribosomal fidelity. This is Dual-specificity RNA methyltransferase RlmN from Nitratidesulfovibrio vulgaris (strain DSM 19637 / Miyazaki F) (Desulfovibrio vulgaris).